The chain runs to 155 residues: Egg cell-secreted protein 1.5 (155 aa).

A signal peptide spans 1–32 (MATKSTSKPLLLSFLMMSYLISTFHVITVAEG).

This sequence belongs to the plant egg cell-secreted peptide family. As to expression, restricted to female reproductive tissues, specifically accumulating in storage vesicles of the unfertilized egg cell.

It localises to the cytoplasmic vesicle. The protein localises to the secreted. Its function is as follows. Involved in the regulation of gamete interactions during the double fertilization and to prevent multiple-pollen tube attraction; mediates the redistribution of the gamete fusogen HAP2/GCS1 to the cell surface after secretion upon sperm arrival. This Arabidopsis thaliana (Mouse-ear cress) protein is Egg cell-secreted protein 1.5 (EC1.5).